Here is a 416-residue protein sequence, read N- to C-terminus: cAMP-dependent protein kinase type II-beta regulatory subunit (416 aa).

Positions Ser2–Leu151 are dimerization and phosphorylation. Residues His53 to Gly97 are disordered. Thr69 is modified (phosphothreonine). 3 positions are modified to phosphoserine: Ser83, Ser85, and Ser112. Residues Leu152–Pro273, Glu221, Arg230, Phe274–Ala416, Glu350, and Arg359 each bind 3',5'-cyclic AMP.

This sequence belongs to the cAMP-dependent kinase regulatory chain family. The inactive form of the enzyme is composed of two regulatory chains and two catalytic chains. Activation by cAMP produces two active catalytic monomers and a regulatory dimer that binds four cAMP molecules. Interacts with PRKACA and PRKACB. Interacts with the phosphorylated form of PJA2. Forms a complex composed of PRKAR2B, GSK3B and GSKIP through GSKIP interaction; facilitates PKA-induced phosphorylation and regulates GSK3B activity. Post-translationally, phosphorylated by the activated catalytic chain. Four types of regulatory chains are found: I-alpha, I-beta, II-alpha, and II-beta. Their expression varies among tissues and is in some cases constitutive and in others inducible. Brain. Present in a few pyramidal neurons and mostly in mossy fibers. Colocalizes with PJA2 in dentate granule cells and at postsynaptic sites of primary hippocampal neurons.

The protein resides in the cytoplasm. Its subcellular location is the cell membrane. Regulatory subunit of the cAMP-dependent protein kinases involved in cAMP signaling in cells. Type II regulatory chains mediate membrane association by binding to anchoring proteins, including the MAP2 kinase. This chain is cAMP-dependent protein kinase type II-beta regulatory subunit (Prkar2b), found in Rattus norvegicus (Rat).